The following is a 176-amino-acid chain: Pituitary adenylate cyclase-activating polypeptide (176 aa).

Positions 1–24 (MTMCSGARLALLVYGIIMHSSVYS) are cleaved as a signal peptide. Residues 25–79 (SPAAAGLRFPGIRPEEEAYGEDGNPLPDFDGSEPPGAGSPASAPRAAAAWYRPAG) constitute a propeptide that is removed on maturation. The disordered stretch occupies residues 39-68 (EEEAYGEDGNPLPDFDGSEPPGAGSPASAP). Residues 56–68 (SEPPGAGSPASAP) show a composition bias toward low complexity. The important for receptor binding stretch occupies residues 150–158 (VKKYLAAVL). L158 carries the post-translational modification Leucine amide. K169 is modified (lysine amide). The propeptide occupies 173–176 (IAYL).

The protein belongs to the glucagon family.

The protein resides in the secreted. Its function is as follows. PACAP is a neuropeptide involved in diverse array of physiological processes through activating the PACAP subfamily of class B1 G protein-coupled receptors: VIP receptor 1 (VIPR1), VIP receptor 2 (VIPR2), and PACAP type I receptor (ADCYAP1R1). Exerts neuroprotective and general cytoprotective effects due to anti-apoptotic, anti-inflammatory, and antioxidant actions. Promotes neuron projection development through the RAPGEF2/Rap1/B-Raf/ERK pathway. In chromaffin cells, induces long-lasting increase of intracellular calcium concentrations and neuroendocrine secretion. Involved in the control of glucose homeostasis, induces insulin secretion by pancreatic beta cells. PACAP exists in two bioactive forms from proteolysis of the same precursor protein, PACAP27 and PACAP38, which differ by eleven amino acid residues in the C-terminus. This is Pituitary adenylate cyclase-activating polypeptide from Homo sapiens (Human).